Consider the following 216-residue polypeptide: LexA repressor (216 aa).

Residues 28 to 48 (RAEIAAELGFSSANSAEEHLR) constitute a DNA-binding region (H-T-H motif). Residues Ser134 and Lys171 each act as for autocatalytic cleavage activity in the active site.

This sequence belongs to the peptidase S24 family. In terms of assembly, homodimer.

It carries out the reaction Hydrolysis of Ala-|-Gly bond in repressor LexA.. In terms of biological role, represses a number of genes involved in the response to DNA damage (SOS response), including recA and lexA. In the presence of single-stranded DNA, RecA interacts with LexA causing an autocatalytic cleavage which disrupts the DNA-binding part of LexA, leading to derepression of the SOS regulon and eventually DNA repair. The polypeptide is LexA repressor (Paraburkholderia xenovorans (strain LB400)).